Here is a 197-residue protein sequence, read N- to C-terminus: Imidazoleglycerol-phosphate dehydratase (197 aa).

The protein belongs to the imidazoleglycerol-phosphate dehydratase family.

The protein resides in the cytoplasm. It catalyses the reaction D-erythro-1-(imidazol-4-yl)glycerol 3-phosphate = 3-(imidazol-4-yl)-2-oxopropyl phosphate + H2O. Its pathway is amino-acid biosynthesis; L-histidine biosynthesis; L-histidine from 5-phospho-alpha-D-ribose 1-diphosphate: step 6/9. The polypeptide is Imidazoleglycerol-phosphate dehydratase (Marinomonas sp. (strain MWYL1)).